The primary structure comprises 246 residues: 3-oxoacyl-[acyl-carrier-protein] reductase FabG (246 aa).

NADP(+) contacts are provided by residues 11–14 (GASR), serine 36, 62–63 (DV), and asparagine 89. Residue serine 141 participates in substrate binding. Residue tyrosine 154 is the Proton acceptor of the active site. NADP(+) is bound by residues 154–158 (YVAAK) and isoleucine 187.

Belongs to the short-chain dehydrogenases/reductases (SDR) family. As to quaternary structure, homotetramer.

It carries out the reaction a (3R)-hydroxyacyl-[ACP] + NADP(+) = a 3-oxoacyl-[ACP] + NADPH + H(+). It participates in lipid metabolism; fatty acid biosynthesis. Its function is as follows. Catalyzes the NADPH-dependent reduction of beta-ketoacyl-ACP substrates to beta-hydroxyacyl-ACP products, the first reductive step in the elongation cycle of fatty acid biosynthesis. The protein is 3-oxoacyl-[acyl-carrier-protein] reductase FabG (fabG) of Bacillus subtilis (strain 168).